Consider the following 103-residue polypeptide: Large ribosomal subunit protein uL23 (103 aa).

The protein belongs to the universal ribosomal protein uL23 family. In terms of assembly, part of the 50S ribosomal subunit. Contacts protein L29, and trigger factor when it is bound to the ribosome.

Its function is as follows. One of the early assembly proteins it binds 23S rRNA. One of the proteins that surrounds the polypeptide exit tunnel on the outside of the ribosome. Forms the main docking site for trigger factor binding to the ribosome. This Zymomonas mobilis subsp. mobilis (strain ATCC 31821 / ZM4 / CP4) protein is Large ribosomal subunit protein uL23.